The chain runs to 274 residues: Formamidopyrimidine-DNA glycosylase (274 aa).

The active-site Schiff-base intermediate with DNA is the proline 2. Glutamate 3 serves as the catalytic Proton donor. Lysine 58 acts as the Proton donor; for beta-elimination activity in catalysis. Positions 91, 110, and 152 each coordinate DNA. The FPG-type zinc finger occupies 237–271 (KVYGRKNLPCLVCENKIETVVIAGRHSAFCPHCQP). Arginine 261 functions as the Proton donor; for delta-elimination activity in the catalytic mechanism.

It belongs to the FPG family. As to quaternary structure, monomer. The cofactor is Zn(2+).

The enzyme catalyses Hydrolysis of DNA containing ring-opened 7-methylguanine residues, releasing 2,6-diamino-4-hydroxy-5-(N-methyl)formamidopyrimidine.. The catalysed reaction is 2'-deoxyribonucleotide-(2'-deoxyribose 5'-phosphate)-2'-deoxyribonucleotide-DNA = a 3'-end 2'-deoxyribonucleotide-(2,3-dehydro-2,3-deoxyribose 5'-phosphate)-DNA + a 5'-end 5'-phospho-2'-deoxyribonucleoside-DNA + H(+). In terms of biological role, involved in base excision repair of DNA damaged by oxidation or by mutagenic agents. Acts as a DNA glycosylase that recognizes and removes damaged bases. Has a preference for oxidized purines, such as 7,8-dihydro-8-oxoguanine (8-oxoG). Has AP (apurinic/apyrimidinic) lyase activity and introduces nicks in the DNA strand. Cleaves the DNA backbone by beta-delta elimination to generate a single-strand break at the site of the removed base with both 3'- and 5'-phosphates. In Legionella pneumophila (strain Paris), this protein is Formamidopyrimidine-DNA glycosylase.